Here is a 271-residue protein sequence, read N- to C-terminus: Cyanophycinase (271 aa).

Catalysis depends on charge relay system residues serine 132, histidine 174, and glutamate 201.

It belongs to the peptidase S51 family. As to quaternary structure, homodimer.

It carries out the reaction [L-4-(L-arginin-2-N-yl)aspartate](n) + H2O = [L-4-(L-arginin-2-N-yl)aspartate](n-1) + L-4-(L-arginin-2-N-yl)aspartate. Functionally, exopeptidase that catalyzes the hydrolytic cleavage of multi-L-arginyl-poly-L-aspartic acid (cyanophycin; a water-insoluble reserve polymer) into aspartate-arginine dipeptides. This is Cyanophycinase (cphB) from Synechocystis sp. (strain ATCC 27184 / PCC 6803 / Kazusa).